We begin with the raw amino-acid sequence, 276 residues long: Tryptophan synthase alpha chain (276 aa).

Residues Glu46 and Glu57 each act as proton acceptor in the active site.

It belongs to the TrpA family. As to quaternary structure, tetramer of two alpha and two beta chains.

It carries out the reaction (1S,2R)-1-C-(indol-3-yl)glycerol 3-phosphate + L-serine = D-glyceraldehyde 3-phosphate + L-tryptophan + H2O. It functions in the pathway amino-acid biosynthesis; L-tryptophan biosynthesis; L-tryptophan from chorismate: step 5/5. The alpha subunit is responsible for the aldol cleavage of indoleglycerol phosphate to indole and glyceraldehyde 3-phosphate. In Halobacterium salinarum (strain ATCC 29341 / DSM 671 / R1), this protein is Tryptophan synthase alpha chain.